Here is a 294-residue protein sequence, read N- to C-terminus: Nucleotide-binding protein A2cp1_0165 (294 aa).

17–24 contacts ATP; the sequence is GVSGSGKS. 68–71 provides a ligand contact to GTP; it reads DARE.

Belongs to the RapZ-like family.

Its function is as follows. Displays ATPase and GTPase activities. The sequence is that of Nucleotide-binding protein A2cp1_0165 from Anaeromyxobacter dehalogenans (strain 2CP-1 / ATCC BAA-258).